The following is a 132-amino-acid chain: Ribosome-binding factor A (132 aa).

It belongs to the RbfA family. Monomer. Binds 30S ribosomal subunits, but not 50S ribosomal subunits or 70S ribosomes.

The protein resides in the cytoplasm. Its function is as follows. One of several proteins that assist in the late maturation steps of the functional core of the 30S ribosomal subunit. Associates with free 30S ribosomal subunits (but not with 30S subunits that are part of 70S ribosomes or polysomes). Required for efficient processing of 16S rRNA. May interact with the 5'-terminal helix region of 16S rRNA. This is Ribosome-binding factor A from Pseudomonas putida (strain ATCC 700007 / DSM 6899 / JCM 31910 / BCRC 17059 / LMG 24140 / F1).